The primary structure comprises 1079 residues: Eukaryotic translation initiation factor 5B (1079 aa).

Residues 1 to 478 (MGKKGKKSGY…QAAPAESNVS (478 aa)) form a disordered region. The span at 22-38 (SGQNEYLDNTSQDSPQN) shows a compositional bias: polar residues. The span at 57–67 (SKKKKGKKNKG) shows a compositional bias: basic residues. Phosphoserine is present on residues Ser73, Ser77, and Ser82. Basic residues predominate over residues 105 to 114 (KKGKKGKKSK). Ser127 is modified (phosphoserine). Positions 160–169 (NNNESEAAAP) are enriched in low complexity. The span at 173 to 192 (PEVRVKTKKEKEREKKEREK) shows a compositional bias: basic and acidic residues. Residues 193–204 (LRKKQQQAKKKG) show a composition bias toward basic residues. A compositionally biased stretch (polar residues) spans 207-233 (GEDTLASSEVSSEVDISTPAENDSSAK). Residues 253–293 (MLEEKRAREEEEQRIREEEARIAEEEKRLAEVEEARKEEAR) are compositionally biased toward basic and acidic residues. 2 stretches are compositionally biased toward low complexity: residues 321–334 (QQAL…QMLE) and 361–376 (RSGT…LESS). Thr364 is modified (phosphothreonine). Positions 385-408 (EPQKDSKDDSEKVEKETEVERKEE) are enriched in basic and acidic residues. The span at 409-431 (NEAEAEAVFDDWEAALEEPEVAE) shows a compositional bias: acidic residues. Basic and acidic residues predominate over residues 436–466 (VTEKKETDIKSDAVEHSIKDKEDSKTDKVDD). One can recognise a tr-type G domain in the interval 482–700 (LRSPICCILG…LISLTQTRMS (219 aa)). The segment at 491-498 (GHVDTGKT) is G1. 491–498 (GHVDTGKT) provides a ligand contact to GTP. Positions 516–520 (GITQQ) are G2. The segment at 555 to 558 (DTPG) is G3. A G4 region spans residues 609-612 (NKVD). The tract at residues 677 to 679 (SAQ) is G5.

It belongs to the TRAFAC class translation factor GTPase superfamily. Classic translation factor GTPase family. IF-2 subfamily. It depends on a monovalent cation as a cofactor.

It localises to the cytoplasm. It catalyses the reaction GTP + H2O = GDP + phosphate + H(+). Functionally, plays a role in translation initiation. Translational GTPase that catalyzes the joining of the 40S and 60S subunits to form the 80S initiation complex with the initiator methionine-tRNA in the P-site base paired to the start codon. GTP binding and hydrolysis induces conformational changes in the enzyme that renders it active for productive interactions with the ribosome. The release of the enzyme after formation of the initiation complex is a prerequisite to form elongation-competent ribosomes. This chain is Eukaryotic translation initiation factor 5B, found in Schizosaccharomyces pombe (strain 972 / ATCC 24843) (Fission yeast).